Consider the following 83-residue polypeptide: RNA-binding protein Hfq (83 aa).

The Sm domain occupies 9–68 (DPYLNALRKERIPVSIFLVNGIKLQGQIESFDQFVILLKNTVSQMVYKHAISTVVPARNV).

This sequence belongs to the Hfq family. In terms of assembly, homohexamer.

RNA chaperone that binds small regulatory RNA (sRNAs) and mRNAs to facilitate mRNA translational regulation in response to envelope stress, environmental stress and changes in metabolite concentrations. Also binds with high specificity to tRNAs. The protein is RNA-binding protein Hfq of Marinobacter nauticus (strain ATCC 700491 / DSM 11845 / VT8) (Marinobacter aquaeolei).